The following is a 277-amino-acid chain: Anamorsin homolog 2 (277 aa).

The tract at residues 1–141 (MDTQPIVLVI…RKPAWDTGSS (141 aa)) is N-terminal SAM-like domain. Residues 141–186 (SFKLKKKVAQKPANVVTFDIPAFKVQLGDDLDDLIDEDSLLTEEDL) form a linker region. Positions 197, 207, 210, and 212 each coordinate [2Fe-2S] cluster. The tract at residues 197 to 212 (CEVGKAGRKACKNCTC) is fe-S binding site A. [4Fe-4S] cluster is bound by residues C238, C241, C249, and C252. Short sequence motifs (cx2C motif) lie at residues 238–241 (CGSC) and 249–252 (CSTC). Positions 238–252 (CGSCGLGDAFRCSTC) are fe-S binding site B.

Belongs to the anamorsin family. As to quaternary structure, monomer. It depends on [2Fe-2S] cluster as a cofactor. [4Fe-4S] cluster is required as a cofactor.

Its subcellular location is the cytoplasm. It is found in the mitochondrion intermembrane space. Its function is as follows. Component of the cytosolic iron-sulfur (Fe-S) protein assembly (CIA) machinery. Required for the maturation of extramitochondrial Fe-S proteins. Part of an electron transfer chain functioning in an early step of cytosolic Fe-S biogenesis, facilitating the de novo assembly of a [4Fe-4S] cluster on the cytosolic Fe-S scaffold complex. Electrons are transferred from NADPH via a FAD- and FMN-containing diflavin oxidoreductase. Together with the diflavin oxidoreductase, also required for the assembly of the diferric tyrosyl radical cofactor of ribonucleotide reductase (RNR), probably by providing electrons for reduction during radical cofactor maturation in the catalytic small subunit. The protein is Anamorsin homolog 2 of Picea sitchensis (Sitka spruce).